Consider the following 416-residue polypeptide: Gamma-glutamyl phosphate reductase (416 aa).

The protein belongs to the gamma-glutamyl phosphate reductase family.

The protein localises to the cytoplasm. The enzyme catalyses L-glutamate 5-semialdehyde + phosphate + NADP(+) = L-glutamyl 5-phosphate + NADPH + H(+). It functions in the pathway amino-acid biosynthesis; L-proline biosynthesis; L-glutamate 5-semialdehyde from L-glutamate: step 2/2. Functionally, catalyzes the NADPH-dependent reduction of L-glutamate 5-phosphate into L-glutamate 5-semialdehyde and phosphate. The product spontaneously undergoes cyclization to form 1-pyrroline-5-carboxylate. In Salmonella paratyphi C (strain RKS4594), this protein is Gamma-glutamyl phosphate reductase.